The following is a 151-amino-acid chain: Large ribosomal subunit protein uL15 (151 aa).

The tract at residues 1 to 58 (MELNQLKSVPKARNHKTKTLGRGHGSGLGKTSGRGQKGQKARKSGLTRPGFEGGQTPL) is disordered. Positions 10-21 (PKARNHKTKTLG) are enriched in basic residues. The segment covering 22–36 (RGHGSGLGKTSGRGQ) has biased composition (gly residues).

Belongs to the universal ribosomal protein uL15 family. In terms of assembly, part of the 50S ribosomal subunit.

Its function is as follows. Binds to the 23S rRNA. This Mycoplasma pneumoniae (strain ATCC 29342 / M129 / Subtype 1) (Mycoplasmoides pneumoniae) protein is Large ribosomal subunit protein uL15.